The primary structure comprises 324 residues: Rho crystallin (324 aa).

At Thr2 the chain carries N-acetylthreonine. Position 218-281 (218-281) interacts with NADP(+); the sequence is SVLGSHRDRN…SFTPARIKQN (64 aa).

This sequence belongs to the aldo/keto reductase family. In terms of assembly, monomer.

The polypeptide is Rho crystallin (Rana temporaria (European common frog)).